Consider the following 149-residue polypeptide: Transcriptional repressor NrdR (149 aa).

Residues 3 to 34 (CPFCCAVDTKVIDSRLVGEGSSVRRRRQCVVC) fold into a zinc finger. The ATP-cone domain maps to 49-139 (PRVVKSNDVR…VYRSFEDIRE (91 aa)).

This sequence belongs to the NrdR family. It depends on Zn(2+) as a cofactor.

Its function is as follows. Negatively regulates transcription of bacterial ribonucleotide reductase nrd genes and operons by binding to NrdR-boxes. This is Transcriptional repressor NrdR from Erwinia tasmaniensis (strain DSM 17950 / CFBP 7177 / CIP 109463 / NCPPB 4357 / Et1/99).